We begin with the raw amino-acid sequence, 644 residues long: Zinc finger protein 568 (644 aa).

The KRAB domain maps to 48–119 (VTFKDVAVDL…EEEMFGRHCP (72 aa)). C2H2-type zinc fingers lie at residues 222-244 (FKCNQCGQDFSHKFDLIRHERIH), 250-272 (YECKECGKAFSRKENLITHQKIH), 278-300 (YKCNECGKAFIQMSNLIRHHRIH), 306-328 (YACKDCWKAFSQKSNLIEHERIH), 334-356 (YECKECGKSFSQKQNLIEHEKIH), 362-384 (YACNECGRAFSRMSSVTLHMRSH), 390-412 (YKCNKCGKAFSQCSVFIIHMRSH), 418-440 (YVCSECGKAFSQSSSLTVHMRNH), 446-468 (YECKECGKAFSRKENLITHQKIH), 474-496 (YECSECGKAFIQMSNLIRHQRIH), 502-524 (YACTVCGKAFSQKSNLTEHEKIH), 530-552 (YHCNQCGKAFSQRQNLLEHEKIH), 558-580 (FKCNECGKAFSRISSLTLHVRSH), 586-608 (YECNKCGKAFSQCSLLIIHMRSH), and 614-636 (FECNECGKAFSQRASLSIHKRGH).

The protein belongs to the krueppel C2H2-type zinc-finger protein family. Interacts with TRIM28.

It is found in the nucleus. Its function is as follows. Has transcriptional repression activity, partially through the recruitment of the corepressor TRIM28 but also has repression activity independently of this interaction. Essential during embryonic development, where it acts as a direct repressor of a placental-specific transcript of IGF2 in early development and regulates convergent extension movements required for axis elongation and tissue morphogenesis in all germ layers. Also important for normal morphogenesis of extraembryonic tissues including the yolk sac, extraembryonic mesoderm and placenta. May enhance proliferation or maintenance of neural stem cells. The chain is Zinc finger protein 568 (ZNF568) from Homo sapiens (Human).